Reading from the N-terminus, the 161-residue chain is Allophycocyanin alpha chain 2 (161 aa).

Asn71 is subject to N4-methylasparagine. Cys81 contributes to the (2R,3E)-phycocyanobilin binding site.

The protein belongs to the phycobiliprotein family. In terms of assembly, component of the phycobilisome. Heterodimer of an alpha and a beta chain. Contains one covalently linked bilin chromophore.

It localises to the cellular thylakoid membrane. Light-harvesting photosynthetic bile pigment-protein from the phycobiliprotein complex. Allophycocyanin has a maximum absorption at approximately 650 nanometers. The chain is Allophycocyanin alpha chain 2 (apcA2) from Microchaete diplosiphon (Fremyella diplosiphon).